The primary structure comprises 780 residues: Gelsolin (780 aa).

Met-1 is modified (N-acetylmethionine; alternate). The N-terminal stretch at 1–25 (MAPYRSSLLCALLLLALCALSPSHA) is a signal peptide. The actin-severing stretch occupies residues 51–174 (VVEHPEFLKA…YKKGGVASGF (124 aa)). A Gelsolin-like 1 repeat occupies 74–155 (FDLVPVPPNL…EVQGFESSTF (82 aa)). Position 84 is a phosphotyrosine (Tyr-84). Residues Gly-90, Asp-91, Glu-122, Asp-134, Gly-139, and Ala-141 each coordinate Ca(2+). Positions 121–124 (DESG) are actin-actin interfilament contact point. Residue 160–167 (KSGLKYKK) participates in a 1,2-diacyl-sn-glycero-3-phospho-(1D-myo-inositol-4,5-bisphosphate) binding. Val-170 serves as a coordination point for Ca(2+). An a 1,2-diacyl-sn-glycero-3-phospho-(1D-myo-inositol-4,5-bisphosphate)-binding site is contributed by 186-194 (RLFQVKGRR). Residues 196-268 (VRATEVPVSW…SEEGGEPEAM (73 aa)) form a Gelsolin-like 2 repeat. Ca(2+) contacts are provided by Gly-211 and Asp-212. Cys-213 and Cys-226 are disulfide-bonded. Residue Glu-234 coordinates Ca(2+). Residues 244-269 (GIRDNERSGRAQVHVSEEGGEPEAML) are disordered. Ca(2+)-binding residues include Asp-284, Glu-327, Asp-328, and Glu-352. One copy of the Gelsolin-like 3 repeat lies at 315–387 (DENPFAQGAL…LPEGGETPLF (73 aa)). Phosphotyrosine is present on residues Tyr-407 and Tyr-463. The tract at residues 432–780 (AAQHGMDDDG…LDRALAELAA (349 aa)) is actin-binding, Ca-sensitive. Residues 453–534 (SNKVPVDPAT…VQGKEPAHLM (82 aa)) form a Gelsolin-like 4 repeat. Gly-469, Asp-470, Glu-500, Asp-512, Gly-517, Pro-519, and Thr-549 together coordinate Ca(2+). The stretch at 575–640 (RAVEVMPKSG…EEGSEPDAFW (66 aa)) is one Gelsolin-like 5 repeat. Residue Lys-582 is modified to N6-acetyllysine. 2 residues coordinate Ca(2+): Asn-589 and Asp-590. Residue Tyr-601 is modified to Phosphotyrosine. Glu-612 is a binding site for Ca(2+). Position 649 is a phosphotyrosine (Tyr-649). The Gelsolin-like 6 repeat unit spans residues 679–754 (IEEVPGELMQ…VRQGFEPPSF (76 aa)). 3 residues coordinate Ca(2+): Asp-694, Asp-695, and Glu-717. Thr-740 is modified (phosphothreonine).

Belongs to the villin/gelsolin family. As to quaternary structure, binds to actin and to fibronectin. Identified in a complex composed of ACTA1, COBL, GSN and TMSB4X. Interacts with the inactive form of EIF2AK2/PKR. Interacts with FLII. Post-translationally, phosphorylated on tyrosine residues in vitro.

Its subcellular location is the cytoplasm. It is found in the cytoskeleton. The protein resides in the secreted. In terms of biological role, calcium-regulated, actin-modulating protein that binds to the plus (or barbed) ends of actin monomers or filaments, preventing monomer exchange (end-blocking or capping). It can promote the assembly of monomers into filaments (nucleation) as well as sever filaments already formed. Plays a role in ciliogenesis. In Mus musculus (Mouse), this protein is Gelsolin (Gsn).